A 482-amino-acid polypeptide reads, in one-letter code: O-phosphoseryl-tRNA(Sec) selenium transferase (482 aa).

A tetramerization region spans residues 1 to 36 (MKSSFGKKEGEYSRLVSKSSNKLLNSLWEKKQIPEE). Residue Arg-69 coordinates pyridoxal 5'-phosphate. The tract at residues 90–100 (GRSGNLLEIQP) is phosphate loop (P-loop). Substrate is bound by residues Arg-91, Ser-92, and Gln-99. At Lys-277 the chain carries N6-(pyridoxal phosphate)lysine. Arg-306 contacts substrate. Residue Arg-388 coordinates tRNA. Residues 461 to 482 (DRRGGSSGRRVPMNESFDMEND) are disordered.

The protein belongs to the SepSecS family. Homotetramer formed by a catalytic dimer and a non-catalytic dimer serving as a binding platform that orients tRNASec for catalysis. Each tetramer binds the CCA ends of two tRNAs which point to the active sites of the catalytic dimer. Requires pyridoxal 5'-phosphate as cofactor.

It localises to the cytoplasm. It carries out the reaction O-phospho-L-seryl-tRNA(Sec) + selenophosphate + H2O = L-selenocysteinyl-tRNA(Sec) + 2 phosphate. Its pathway is aminoacyl-tRNA biosynthesis; selenocysteinyl-tRNA(Sec) biosynthesis; selenocysteinyl-tRNA(Sec) from L-seryl-tRNA(Sec) (archaeal/eukaryal route): step 2/2. Functionally, converts O-phosphoseryl-tRNA(Sec) to selenocysteinyl-tRNA(Sec) required for selenoprotein biosynthesis. This is O-phosphoseryl-tRNA(Sec) selenium transferase (secs-1) from Caenorhabditis briggsae.